Reading from the N-terminus, the 130-residue chain is Cholecystokinin (130 aa).

Positions 1-20 (MYGGICICVLLAALSVSSLG) are cleaved as a signal peptide. A propeptide spanning residues 21-48 (QQPAGSHDGSPVAAELQQSLTEPHRHSR) is cleaved from the precursor. The disordered stretch occupies residues 21–63 (QQPAGSHDGSPVAAELQQSLTEPHRHSRAPSSAGPLKPAPRLD). Position 112 is a sulfotyrosine (Tyr-112). Phe-118 carries the phenylalanine amide modification. A propeptide spanning residues 122 to 130 (SAEEYEYSS) is cleaved from the precursor. 2 positions are modified to sulfotyrosine: Tyr-126 and Tyr-128.

Belongs to the gastrin/cholecystokinin family. Post-translationally, the precursor is cleaved by proteases to produce a number of active cholecystokinins. As to expression, in the small intestine, the major production site is around the vitelline diverticulum.

Its subcellular location is the secreted. This peptide hormone induces gall bladder contraction and the release of pancreatic enzymes in the gut. Its function in the brain is not clear. It also decreases food intake and regulates gastrointestinal physiological processes. The protein is Cholecystokinin (CCK) of Gallus gallus (Chicken).